The primary structure comprises 286 residues: MSELNESTTSKFVTINEKGLSNFRIHLNDAGEGEAVIMLHGGGPGAGGWSNYYRNIGPFVKAGYRVILQDAPGFNKSDTVVMDEQRGLVNARSVKGMMDVLGIEKAHLVGNSMGGAGALNFALEYPERTGKLILMGPGGLGNSLFTAMPMEGIKLLFKLYAEPSLDTLKQMLNVFLFDQSLITDELVQGRWANIQRNPEHLKNFLLSSQKLPLSSWNVSPRMGEIKAKTLVTWGRDDRFVPLDHGLKLVANMPDAQLHVFPRCGHWAQWEHADAFNRLTLDFLANG.

Positions 36–271 (VIMLHGGGPG…RCGHWAQWEH (236 aa)) constitute an AB hydrolase-1 domain. Histidine 265 (proton acceptor) is an active-site residue.

It belongs to the AB hydrolase superfamily. BphD family. As to quaternary structure, homodimer.

It catalyses the reaction (2Z,4E)-2-hydroxy-6-oxonona-2,4-dienedioate + H2O = (2Z)-2-hydroxypenta-2,4-dienoate + succinate + H(+). The catalysed reaction is (2Z,4E,7E)-2-hydroxy-6-oxonona-2,4,7-trienedioate + H2O = (2Z)-2-hydroxypenta-2,4-dienoate + fumarate + H(+). Its pathway is aromatic compound metabolism; 3-phenylpropanoate degradation. Its function is as follows. Catalyzes the cleavage of the C5-C6 bond of 2-hydroxy-6-oxononadienedioate, and probably also 2-hydroxy-6-oxononatrienedioate, a dienol ring fission product of the bacterial meta-cleavage pathway for degradation of phenylpropionic acid. The sequence is that of 2-hydroxy-6-oxononadienedioate/2-hydroxy-6-oxononatrienedioate hydrolase (mhpC) from Comamonas testosteroni (Pseudomonas testosteroni).